The primary structure comprises 494 residues: UDP-N-acetylmuramate--L-alanine ligase (494 aa).

122–128 (GTHGKTT) provides a ligand contact to ATP.

This sequence belongs to the MurCDEF family.

Its subcellular location is the cytoplasm. It catalyses the reaction UDP-N-acetyl-alpha-D-muramate + L-alanine + ATP = UDP-N-acetyl-alpha-D-muramoyl-L-alanine + ADP + phosphate + H(+). It participates in cell wall biogenesis; peptidoglycan biosynthesis. Cell wall formation. This Mycobacterium bovis (strain ATCC BAA-935 / AF2122/97) protein is UDP-N-acetylmuramate--L-alanine ligase.